Consider the following 694-residue polypeptide: MAQLDTLDLVVLAVLLVGSVAYFTKGTYWAVAKDPYASTGPAMNGAAKAGKTRNIIEKMEETGKNCVIFYGSQTGTAEDYASRLAKEGSQRFGLKTMVADLEEYDYENLDQFPEDKVAFFVLATYGEGEPTDNAVEFYQFFTGDDVAFESASADEKPLSKLKYVAFGLGNNTYEHYNAMVRQVDAAFQKLGPQRIGSAGEGDDGAGTMEEDFLAWKEPMWAALSESMDLEEREAVYEPVFCVTENESLSPEDETVYLGEPTQSHLQGTPKGPYSAHNPFIAPIAESRELFTVKDRNCLHMEISIAGSNLSYQTGDHIAVWPTNAGAEVDRFLQVFGLEGKRDSVINIKGIDVTAKVPIPTPTTYDAAVRYYMEVCAPVSRQFVATLAAFAPDEESKAEIVRLGSHKDYFHEKVTNQCFNMAQALQSITSKPFSAVPFSLLIEGITKLQPRYYSISSSSLVQKDKISITAVVESVRLPGASHMVKGVTTNYLLALKQKQNGDPSPDPHGLTYSITGPRNKYDGIHVPVHVRHSNFKLPSDPSRPIIMVGPGTGVAPFRGFIQERAALAAKGEKVGPTVLFFGCRKSDEDFLYKDEWKTYQDQLGDNLKIITAFSREGPQKVYVQHRLREHSELVSDLLKQKATFYVCGDAANMAREVNLVLGQIIAAQRGLPAEKGEEMVKHMRRRGRYQEDVWS.

At 1–8 (MAQLDTLD) the chain is on the lumenal side. A helical transmembrane segment spans residues 9-31 (LVVLAVLLVGSVAYFTKGTYWAV). Topologically, residues 32-694 (AKDPYASTGP…RGRYQEDVWS (663 aa)) are cytoplasmic. In terms of domain architecture, Flavodoxin-like spans 66-220 (CVIFYGSQTG…DFLAWKEPMW (155 aa)). FMN-binding positions include 72–77 (SQTGTA), 123–126 (ATYG), 168–177 (LGNNTYEHYN), and D203. In terms of domain architecture, FAD-binding FR-type spans 276–537 (HNPFIAPIAE…HVRHSNFKLP (262 aa)). R295 serves as a coordination point for NADP(+). FAD is bound by residues 450-453 (RYYS), 468-470 (TAV), and 485-488 (GVTT). Residues T551, 613–614 (SR), 619–623 (KVYVQ), and E655 contribute to the NADP(+) site. Position 693 (W693) interacts with FAD.

It belongs to the NADPH--cytochrome P450 reductase family. This sequence in the N-terminal section; belongs to the flavodoxin family. The protein in the C-terminal section; belongs to the flavoprotein pyridine nucleotide cytochrome reductase family. It depends on FAD as a cofactor. FMN serves as cofactor.

Its subcellular location is the endoplasmic reticulum membrane. The protein resides in the mitochondrion outer membrane. It is found in the cell membrane. The catalysed reaction is 2 oxidized [cytochrome P450] + NADPH = 2 reduced [cytochrome P450] + NADP(+) + H(+). In terms of biological role, this enzyme is required for electron transfer from NADP to cytochrome P450 in microsomes. It can also provide electron transfer to heme oxygenase and cytochrome B5. Involved in ergosterol biosynthesis. The chain is NADPH--cytochrome P450 reductase from Aspergillus niger.